Consider the following 362-residue polypeptide: 3-dehydroquinate synthase (362 aa).

Residues 71–76, 105–109, 129–130, lysine 142, lysine 151, and 169–172 contribute to the NAD(+) site; these read DGEQYK, GVVGD, TT, and CLKT. Zn(2+)-binding residues include glutamate 184, histidine 248, and histidine 265.

It belongs to the sugar phosphate cyclases superfamily. Dehydroquinate synthase family. Co(2+) is required as a cofactor. It depends on Zn(2+) as a cofactor. NAD(+) serves as cofactor.

It is found in the cytoplasm. The catalysed reaction is 7-phospho-2-dehydro-3-deoxy-D-arabino-heptonate = 3-dehydroquinate + phosphate. It functions in the pathway metabolic intermediate biosynthesis; chorismate biosynthesis; chorismate from D-erythrose 4-phosphate and phosphoenolpyruvate: step 2/7. In terms of biological role, catalyzes the conversion of 3-deoxy-D-arabino-heptulosonate 7-phosphate (DAHP) to dehydroquinate (DHQ). This chain is 3-dehydroquinate synthase, found in Yersinia pseudotuberculosis serotype O:1b (strain IP 31758).